An 837-amino-acid polypeptide reads, in one-letter code: Neural cell adhesion molecule 2 (837 aa).

The signal sequence occupies residues 1-19 (MSLLLSFYLLGLLVSSGQA). The Extracellular segment spans residues 20-697 (LLQVTISLSK…PNIIKDTLFN (678 aa)). 5 consecutive Ig-like C2-type domains span residues 21–108 (LQVT…ATVV), 113–202 (QKLT…RDII), 208–297 (PPAI…AFLQ), 302–396 (PHII…MYLD), and 401–491 (PKFI…YILA). 2 cysteine pairs are disulfide-bonded: Cys42-Cys93 and Cys136-Cys186. 2 N-linked (GlcNAc...) asparagine glycosylation sites follow: Asn177 and Asn219. Cys232 and Cys281 are disulfide-bonded. N-linked (GlcNAc...) asparagine glycosylation occurs at Asn309. A disulfide bond links Cys322 and Cys380. N-linked (GlcNAc...) asparagine glycans are attached at residues Asn406, Asn419, Asn445, Asn474, and Asn562. A disulfide bridge links Cys422 with Cys475. 2 consecutive Fibronectin type-III domains span residues 498 to 591 (SPYG…TLPV) and 593 to 688 (EPSP…PPKP). Residues 698 to 718 (GLGLGAVIGLGVAALLLILVV) traverse the membrane as a helical segment. At 719-837 (TDVSCFFIRQ…IQSKEDDSKA (119 aa)) the chain is on the cytoplasmic side. Over residues 764–785 (GSKEPIVEMRTEDERVTNHEDG) the composition is skewed to basic and acidic residues. The disordered stretch occupies residues 764–818 (GSKEPIVEMRTEDERVTNHEDGSPVNEPNETTPLTEPEKLPLKEEDGKEALNPET). Ser765 carries the post-translational modification Phosphoserine. At Thr780 the chain carries Phosphothreonine. At Ser786 the chain carries Phosphoserine. The segment covering 789-798 (NEPNETTPLT) has biased composition (low complexity). Positions 799–814 (EPEKLPLKEEDGKEAL) are enriched in basic and acidic residues.

As to expression, expressed most strongly in adult and fetal brain.

It localises to the cell membrane. Functionally, may play important roles in selective fasciculation and zone-to-zone projection of the primary olfactory axons. The polypeptide is Neural cell adhesion molecule 2 (NCAM2) (Homo sapiens (Human)).